A 299-amino-acid chain; its full sequence is Probable alpha-L-glutamate ligase (299 aa).

The ATP-grasp domain maps to 104 to 287; that stretch reads LQLLAREGIE…VSGKIIEFLE (184 aa). ATP is bound by residues lysine 141, 178–179, aspartate 187, and 211–213; these read EF and RSN. 3 residues coordinate Mg(2+): aspartate 248, glutamate 260, and asparagine 262. Residues aspartate 248, glutamate 260, and asparagine 262 each contribute to the Mn(2+) site.

The protein belongs to the RimK family. The cofactor is Mg(2+). Mn(2+) serves as cofactor.

The chain is Probable alpha-L-glutamate ligase from Trichodesmium erythraeum (strain IMS101).